Reading from the N-terminus, the 196-residue chain is Protein LSM12 homolog B (196 aa).

Residues 3–70 (APGPGEYFSV…LAYVSEVDII (68 aa)) enclose the Sm domain. Residues 81–175 (ASLNFNKLVN…IVEKHFRDVE (95 aa)) enclose the AD domain.

Belongs to the LSM12 family.

The protein is Protein LSM12 homolog B (lsm12b) of Danio rerio (Zebrafish).